We begin with the raw amino-acid sequence, 264 residues long: ATP synthase subunit a (264 aa).

The next 6 helical transmembrane spans lie at 29–49, 90–110, 134–154, 177–197, 208–228, and 235–255; these read TWHIDSLFFSVGLGVLFLWIF, IAPLALTIFVWVFMMNFMDMI, DVNITFSLAIGVFLLIIFYSI, IPVNLLLETVTLIAKPISLAL, LIFILIALMYGTNLLLSTLGV, and LIFHILVITLQAFIFMMLTIV.

This sequence belongs to the ATPase A chain family. F-type ATPases have 2 components, CF(1) - the catalytic core - and CF(0) - the membrane proton channel. CF(1) has five subunits: alpha(3), beta(3), gamma(1), delta(1), epsilon(1). CF(0) has three main subunits: a(1), b(2) and c(9-12). The alpha and beta chains form an alternating ring which encloses part of the gamma chain. CF(1) is attached to CF(0) by a central stalk formed by the gamma and epsilon chains, while a peripheral stalk is formed by the delta and b chains.

It is found in the cell inner membrane. In terms of biological role, key component of the proton channel; it plays a direct role in the translocation of protons across the membrane. The polypeptide is ATP synthase subunit a (Shewanella baltica (strain OS223)).